We begin with the raw amino-acid sequence, 419 residues long: UDP-N-acetylglucosamine 1-carboxyvinyltransferase (419 aa).

22–23 provides a ligand contact to phosphoenolpyruvate; the sequence is KN. Residue Arg-95 participates in UDP-N-acetyl-alpha-D-glucosamine binding. Cys-119 (proton donor) is an active-site residue. Cys-119 is modified (2-(S-cysteinyl)pyruvic acid O-phosphothioketal). UDP-N-acetyl-alpha-D-glucosamine contacts are provided by residues 164–167, Asp-308, and Ile-330; that span reads KVSV.

Belongs to the EPSP synthase family. MurA subfamily.

Its subcellular location is the cytoplasm. The catalysed reaction is phosphoenolpyruvate + UDP-N-acetyl-alpha-D-glucosamine = UDP-N-acetyl-3-O-(1-carboxyvinyl)-alpha-D-glucosamine + phosphate. It functions in the pathway cell wall biogenesis; peptidoglycan biosynthesis. Its function is as follows. Cell wall formation. Adds enolpyruvyl to UDP-N-acetylglucosamine. The polypeptide is UDP-N-acetylglucosamine 1-carboxyvinyltransferase (Rickettsia africae (strain ESF-5)).